Consider the following 733-residue polypeptide: Histone-lysine N-methyltransferase, H3 lysine-36 specific (733 aa).

A disordered region spans residues methionine 1–glutamine 32. At serine 10 the chain carries Phosphoserine. Over residues glutamate 22–aspartate 31 the composition is skewed to basic and acidic residues. The 56-residue stretch at asparagine 63 to glutamine 118 folds into the AWS domain. An SET domain is found at alanine 120 to asparagine 237. Residues glutamine 244–glycine 260 enclose the Post-SET domain. The region spanning valine 475–glycine 507 is the WW domain. 2 disordered regions span residues proline 504–glutamate 548 and lysine 672–histidine 692. A compositionally biased stretch (polar residues) spans serine 506–isoleucine 528. Residue serine 522 is modified to Phosphoserine. Residues glutamate 548–histidine 630 adopt a coiled-coil conformation. The segment at arginine 619 to serine 718 is binding to RNA polymerase II CTD. Residues lysine 672 to lysine 688 are compositionally biased toward basic and acidic residues.

Belongs to the class V-like SAM-binding methyltransferase superfamily. Histone-lysine methyltransferase family. SET2 subfamily. As to quaternary structure, interacts with the RNA polymerase II hyperphosphorylated CTD. Interacts with CYC8.

It is found in the nucleus. The protein resides in the chromosome. It catalyses the reaction L-lysyl(36)-[histone H3] + 3 S-adenosyl-L-methionine = N(6),N(6),N(6)-trimethyl-L-lysyl(36)-[histone H3] + 3 S-adenosyl-L-homocysteine + 3 H(+). In terms of biological role, histone methyltransferase that trimethylates histone H3 'Lys-36' forming H3K36me3. Involved in transcription elongation as well as in transcription repression. The methyltransferase activity requires the recruitment to the RNA polymerase II, which is CTK1 dependent. This chain is Histone-lysine N-methyltransferase, H3 lysine-36 specific (SET2), found in Saccharomyces cerevisiae (strain ATCC 204508 / S288c) (Baker's yeast).